A 224-amino-acid chain; its full sequence is Large ribosomal subunit protein uL16z (224 aa).

It belongs to the universal ribosomal protein uL16 family. Component of the small ribosomal subunit. Mature ribosomes consist of a small (40S) and a large (60S) subunit. The 40S subunit contains about 33 different proteins and 1 molecule of RNA (18S). The 60S subunit contains about 49 different proteins and 3 molecules of RNA (25S, 5.8S and 5S).

The sequence is that of Large ribosomal subunit protein uL16z (SC34) from Oryza sativa subsp. indica (Rice).